Consider the following 237-residue polypeptide: Large ribosomal subunit protein uL1 (237 aa).

It belongs to the universal ribosomal protein uL1 family. Part of the 50S ribosomal subunit.

Binds directly to 23S rRNA. The L1 stalk is quite mobile in the ribosome, and is involved in E site tRNA release. Functionally, protein L1 is also a translational repressor protein, it controls the translation of the L11 operon by binding to its mRNA. The polypeptide is Large ribosomal subunit protein uL1 (Dehalococcoides mccartyi (strain ATCC BAA-2100 / JCM 16839 / KCTC 5957 / BAV1)).